The following is an 86-amino-acid chain: MKSIVFVALFGLALLAVVCSASEDAHKELLKEVVRAMVVDKTDAVQAEERECRWYLGGCSQDGDCCKHLQCHSNYEWCVWDGTFSK.

A signal peptide spans 1 to 21 (MKSIVFVALFGLALLAVVCSA). A propeptide spanning residues 22 to 50 (SEDAHKELLKEVVRAMVVDKTDAVQAEER) is cleaved from the precursor. 3 disulfides stabilise this stretch: C52–C66, C59–C71, and C65–C78.

This sequence belongs to the neurotoxin 10 (Hwtx-1) family. 17 (Hntx-9) subfamily. Expressed by the venom gland.

The protein resides in the secreted. In terms of biological role, ion channel inhibitor. In Cyriopagopus hainanus (Chinese bird spider), this protein is Omega-theraphotoxin-Hhn1a 1.